The sequence spans 334 residues: Cell division protein ZipA (334 aa).

At 1-2 (ME) the chain is on the periplasmic side. Residues 3 to 23 (LHIIFLILGGLLIVLLAGFSI) form a helical membrane-spanning segment. The Cytoplasmic portion of the chain corresponds to 24-334 (YSARREKSRI…DRQAYFARVS (311 aa)).

The protein belongs to the ZipA family. In terms of assembly, interacts with FtsZ via their C-terminal domains.

It is found in the cell inner membrane. Functionally, essential cell division protein that stabilizes the FtsZ protofilaments by cross-linking them and that serves as a cytoplasmic membrane anchor for the Z ring. Also required for the recruitment to the septal ring of downstream cell division proteins. In Haemophilus ducreyi (strain 35000HP / ATCC 700724), this protein is Cell division protein ZipA.